The following is a 160-amino-acid chain: Cytochrome b6-f complex subunit 4 (160 aa).

3 helical membrane passes run leucine 36–valine 56, leucine 95–glutamate 115, and isoleucine 131–isoleucine 151.

Belongs to the cytochrome b family. PetD subfamily. As to quaternary structure, the 4 large subunits of the cytochrome b6-f complex are cytochrome b6, subunit IV (17 kDa polypeptide, petD), cytochrome f and the Rieske protein, while the 4 small subunits are petG, petL, petM and petN. The complex functions as a dimer.

Its subcellular location is the plastid. It localises to the chloroplast thylakoid membrane. Functionally, component of the cytochrome b6-f complex, which mediates electron transfer between photosystem II (PSII) and photosystem I (PSI), cyclic electron flow around PSI, and state transitions. This is Cytochrome b6-f complex subunit 4 from Chlamydomonas moewusii (Chlamydomonas eugametos).